The following is a 446-amino-acid chain: Methionine aminopeptidase 2-1 (446 aa).

The interval 1–88 (MAAQVTPELA…PPRVILSSIF (88 aa)) is disordered. A compositionally biased stretch (acidic residues) spans 32–44 (ENEDVESDDDNEG). Positions 57-72 (AKKKKKKKPKKKKKGG) are enriched in basic residues. Residue H196 participates in substrate binding. 3 residues coordinate a divalent metal cation: D216, D227, and H296. H304 lines the substrate pocket. 2 residues coordinate a divalent metal cation: E332 and E427.

This sequence belongs to the peptidase M24A family. Methionine aminopeptidase eukaryotic type 2 subfamily. Co(2+) serves as cofactor. It depends on Zn(2+) as a cofactor. The cofactor is Mn(2+). Requires Fe(2+) as cofactor.

It localises to the cytoplasm. The enzyme catalyses Release of N-terminal amino acids, preferentially methionine, from peptides and arylamides.. Cotranslationally removes the N-terminal methionine from nascent proteins. The N-terminal methionine is often cleaved when the second residue in the primary sequence is small and uncharged (Met-Ala-, Cys, Gly, Pro, Ser, Thr, or Val). The polypeptide is Methionine aminopeptidase 2-1 (Blastomyces gilchristii (strain SLH14081) (Blastomyces dermatitidis)).